The chain runs to 363 residues: UDP-N-acetylenolpyruvoylglucosamine reductase (363 aa).

The 171-residue stretch at 27-197 (LGGWATRVVT…LSVDFRLARS (171 aa)) folds into the FAD-binding PCMH-type domain. Arginine 175 is a catalytic residue. Serine 252 serves as the catalytic Proton donor. Residue glutamate 355 is part of the active site.

The protein belongs to the MurB family. FAD serves as cofactor.

It localises to the cytoplasm. It catalyses the reaction UDP-N-acetyl-alpha-D-muramate + NADP(+) = UDP-N-acetyl-3-O-(1-carboxyvinyl)-alpha-D-glucosamine + NADPH + H(+). The protein operates within cell wall biogenesis; peptidoglycan biosynthesis. Functionally, cell wall formation. The polypeptide is UDP-N-acetylenolpyruvoylglucosamine reductase (Salinispora arenicola (strain CNS-205)).